Reading from the N-terminus, the 614-residue chain is Sulfite reductase [NADPH] flavoprotein alpha-component (614 aa).

Positions 79–217 (LTIIFASQTG…AATEWRKQVL (139 aa)) constitute a Flavodoxin-like domain. FMN-binding positions include 85-90 (SQTGNA), 132-135 (STNG), and 168-177 (LGDSSYQFFC). One can recognise an FAD-binding FR-type domain in the interval 249-463 (EQPYTASLST…VEHNNNFKLP (215 aa)). Residues threonine 337, threonine 371, 401-404 (RLYS), 419-421 (TVG), tyrosine 425, and 434-437 (GGAS) contribute to the FAD site. NADP(+) is bound by residues 534–535 (SR), 540–544 (KVYVQ), and aspartate 576. Position 614 (tyrosine 614) interacts with FAD.

It belongs to the NADPH-dependent sulphite reductase flavoprotein subunit CysJ family. The protein in the N-terminal section; belongs to the flavodoxin family. In the C-terminal section; belongs to the flavoprotein pyridine nucleotide cytochrome reductase family. In terms of assembly, alpha(8)-beta(8). The alpha component is a flavoprotein, the beta component is a hemoprotein. The cofactor is FAD. FMN serves as cofactor.

The enzyme catalyses hydrogen sulfide + 3 NADP(+) + 3 H2O = sulfite + 3 NADPH + 4 H(+). Its pathway is sulfur metabolism; hydrogen sulfide biosynthesis; hydrogen sulfide from sulfite (NADPH route): step 1/1. In terms of biological role, component of the sulfite reductase complex that catalyzes the 6-electron reduction of sulfite to sulfide. This is one of several activities required for the biosynthesis of L-cysteine from sulfate. The flavoprotein component catalyzes the electron flow from NADPH -&gt; FAD -&gt; FMN to the hemoprotein component. This chain is Sulfite reductase [NADPH] flavoprotein alpha-component, found in Vibrio cholerae serotype O1 (strain ATCC 39315 / El Tor Inaba N16961).